Here is a 507-residue protein sequence, read N- to C-terminus: Maturase K (507 aa).

This sequence belongs to the intron maturase 2 family. MatK subfamily.

The protein resides in the plastid. Its subcellular location is the chloroplast. Usually encoded in the trnK tRNA gene intron. Probably assists in splicing its own and other chloroplast group II introns. In Euryale ferox (Gorgon plant), this protein is Maturase K.